A 697-amino-acid chain; its full sequence is Potassium-transporting ATPase ATP-binding subunit (697 aa).

A run of 4 helical transmembrane segments spans residues proline 55–serine 75, serine 79–alanine 99, leucine 245–phenylalanine 265, and valine 271–isoleucine 291. The 4-aspartylphosphate intermediate role is filled by aspartate 324. Residues aspartate 361, glutamate 365, phenylalanine 393 to serine 400, and lysine 412 contribute to the ATP site. Residues aspartate 535 and aspartate 539 each coordinate Mg(2+). 3 consecutive transmembrane segments (helical) span residues phenylalanine 605–methionine 625, alanine 633–methionine 653, and glycine 677–isoleucine 697.

This sequence belongs to the cation transport ATPase (P-type) (TC 3.A.3) family. Type IA subfamily. The system is composed of three essential subunits: KdpA, KdpB and KdpC.

Its subcellular location is the cell membrane. The catalysed reaction is K(+)(out) + ATP + H2O = K(+)(in) + ADP + phosphate + H(+). Its function is as follows. Part of the high-affinity ATP-driven potassium transport (or Kdp) system, which catalyzes the hydrolysis of ATP coupled with the electrogenic transport of potassium into the cytoplasm. This subunit is responsible for energy coupling to the transport system and for the release of the potassium ions to the cytoplasm. The protein is Potassium-transporting ATPase ATP-binding subunit of Bacillus cereus (strain ATCC 14579 / DSM 31 / CCUG 7414 / JCM 2152 / NBRC 15305 / NCIMB 9373 / NCTC 2599 / NRRL B-3711).